Here is a 519-residue protein sequence, read N- to C-terminus: Probable WRKY transcription factor 33 (519 aa).

2 disordered regions span residues 1–34 (MAAS…STSS) and 123–212 (SSGV…CTFP). The span at 7 to 34 (TMDNSRTRQNMNGSANWSQQSGRTSTSS) shows a compositional bias: polar residues. The span at 130 to 142 (TTTTTTTTTTTTT) shows a compositional bias: low complexity. The segment covering 164–174 (TETRPNNQAVS) has biased composition (polar residues). The span at 178 to 188 (REQRKGEDGYN) shows a compositional bias: basic and acidic residues. Positions 178 to 242 (REQRKGEDGY…YKGSHNHPKP (65 aa)) form a DNA-binding region, WRKY 1. Residues C209, C214, H237, and H239 each contribute to the Zn(2+) site. 2 disordered regions span residues 232–255 (VYKG…SSTF) and 267–349 (NRQA…REPR). Low complexity predominate over residues 245–254 (TRRSSSSSST). The span at 269–299 (QASSDQPNSNNSFHQSDSFGMQQEDNTTSDS) shows a compositional bias: polar residues. Over residues 323-332 (PEAKRWKGDN) the composition is skewed to basic and acidic residues. Positions 356-421 (SDIDILDDGY…YEGKHNHDVP (66 aa)) form a DNA-binding region, WRKY 2. The Zn(2+) site is built by C387, C392, H416, and H418.

The protein belongs to the WRKY group I family. In terms of assembly, interacts with MKS1. Interacts with ATG18A. Interacts with SIB1 and SIB2. Interacts with VQ1 and VQ10. Phosphorylated by MPK4. Phosphorylated on serine residues by MPK3 and MPK6 following infection with the necrotrophic fungal pathogen B.cinerea. In terms of tissue distribution, highly expressed in roots, leaves and flowers, and at lower levels in stems, siliques and seeds.

The protein resides in the nucleus. In terms of biological role, transcription factor. Interacts specifically with the W box (5'-TTGAC[CT]-3'), a frequently occurring elicitor-responsive cis-acting element. Involved in defense responses. Required for resistance to the necrotrophic fungal pathogen B.cinerea. Regulates the antagonistic relationship between defense pathways mediating responses to the bacterial pathogen P. syringae and the necrotrophic pathogen B.cinerea. Required for the phytoalexin camalexin synthesis following infection with B.cinerea. Acts as a positive regulator of the camalexin biosynthetic genes PAD3 (CYP71B15) and CYP71A13 by binding to their promoters. Acts downstream of MPK3 and MPK6 in reprogramming the expression of camalexin biosynthetic genes, which drives the metabolic flow to camalexin production. Functions with WRKY25 as positive regulator of salt stress response and abscisic acid (ABA) signaling. Functions with WRKY25 and WRKY26 as positive regulator of plant thermotolerance by partially participating in ethylene-response signal transduction pathway. The DNA-binding activity of WRKY33 is increased by SIB1 and SIB2. The chain is Probable WRKY transcription factor 33 (WRKY33) from Arabidopsis thaliana (Mouse-ear cress).